The chain runs to 41 residues: SPAVQEKAAWPELVGKTPEEARAQILLDKPNANVVVLEHHD.

Functionally, inhibits chymotrypsin. This chain is Chymotrypsin inhibitor, found in Eisenia hortensis (European nightcrawler).